Here is a 467-residue protein sequence, read N- to C-terminus: Ribosomal protein uS12 methylthiotransferase RimO (467 aa).

Residues 1-110 (MDLHGCAKNQ…LPQLIDSMFP (110 aa)) enclose the MTTase N-terminal domain. [4Fe-4S] cluster-binding residues include C6, C42, C73, C153, C157, and C160. Residues 139–386 (LNFPRSTYIK…QNAQTSITEK (248 aa)) enclose the Radical SAM core domain. In terms of domain architecture, TRAM spans 389–467 (DSFIGKEIEV…NGFDLEAVAV (79 aa)).

This sequence belongs to the methylthiotransferase family. RimO subfamily. Requires [4Fe-4S] cluster as cofactor.

It is found in the cytoplasm. The catalysed reaction is L-aspartate(89)-[ribosomal protein uS12]-hydrogen + (sulfur carrier)-SH + AH2 + 2 S-adenosyl-L-methionine = 3-methylsulfanyl-L-aspartate(89)-[ribosomal protein uS12]-hydrogen + (sulfur carrier)-H + 5'-deoxyadenosine + L-methionine + A + S-adenosyl-L-homocysteine + 2 H(+). Catalyzes the methylthiolation of an aspartic acid residue of ribosomal protein uS12. This Treponema denticola (strain ATCC 35405 / DSM 14222 / CIP 103919 / JCM 8153 / KCTC 15104) protein is Ribosomal protein uS12 methylthiotransferase RimO.